The sequence spans 171 residues: 3-hydroxydecanoyl-[acyl-carrier-protein] dehydratase (171 aa).

H71 is an active-site residue.

This sequence belongs to the thioester dehydratase family. FabA subfamily. In terms of assembly, homodimer.

The protein resides in the cytoplasm. It catalyses the reaction a (3R)-hydroxyacyl-[ACP] = a (2E)-enoyl-[ACP] + H2O. The catalysed reaction is (3R)-hydroxydecanoyl-[ACP] = (2E)-decenoyl-[ACP] + H2O. The enzyme catalyses (2E)-decenoyl-[ACP] = (3Z)-decenoyl-[ACP]. It participates in lipid metabolism; fatty acid biosynthesis. Its function is as follows. Necessary for the introduction of cis unsaturation into fatty acids. Catalyzes the dehydration of (3R)-3-hydroxydecanoyl-ACP to E-(2)-decenoyl-ACP and then its isomerization to Z-(3)-decenoyl-ACP. Can catalyze the dehydratase reaction for beta-hydroxyacyl-ACPs with saturated chain lengths up to 16:0, being most active on intermediate chain length. The polypeptide is 3-hydroxydecanoyl-[acyl-carrier-protein] dehydratase (Sinorhizobium fredii (strain NBRC 101917 / NGR234)).